Consider the following 126-residue polypeptide: UPF0212 protein TON_0350 (126 aa).

It belongs to the UPF0212 family.

The polypeptide is UPF0212 protein TON_0350 (Thermococcus onnurineus (strain NA1)).